A 95-amino-acid chain; its full sequence is Protein TusB (95 aa).

This sequence belongs to the DsrH/TusB family. Heterohexamer, formed by a dimer of trimers. The hexameric TusBCD complex contains 2 copies each of TusB, TusC and TusD. The TusBCD complex interacts with TusE.

It is found in the cytoplasm. Its function is as follows. Part of a sulfur-relay system required for 2-thiolation of 5-methylaminomethyl-2-thiouridine (mnm(5)s(2)U) at tRNA wobble positions. This chain is Protein TusB, found in Pectobacterium parmentieri.